Reading from the N-terminus, the 101-residue chain is Cysteine-rich and transmembrane domain-containing protein B (101 aa).

The segment at 1 to 80 (MSQQPPAVGV…PQQQQQQKHS (80 aa)) is disordered. Residues 24–43 (DAYPPPGQPYPQQGYPPPQG) are compositionally biased toward pro residues. Residues 59–77 (YPEQGYPQQGYPPQQQQQQ) are compositionally biased toward low complexity. Residues 78-95 (KHSPGMLEGCIAALCCYC) traverse the membrane as a helical segment.

This sequence belongs to the CYSTM1 family.

It localises to the membrane. The polypeptide is Cysteine-rich and transmembrane domain-containing protein B (Arabidopsis thaliana (Mouse-ear cress)).